The following is a 417-amino-acid chain: Actin-related protein 10 (417 aa).

The protein belongs to the actin family. In terms of assembly, subunit of dynactin, a multiprotein complex part of a tripartite complex with dynein and a adapter, such as BICDL1, BICD2 or HOOK3. The dynactin complex is built around ACTR1A/ACTB filament and consists of an actin-related filament composed of a shoulder domain, a pointed end and a barbed end. Its length is defined by its flexible shoulder domain. The soulder is composed of 2 DCTN1 subunits, 4 DCTN2 and 2 DCTN3. The 4 DCNT2 (via N-terminus) bind the ACTR1A filament and act as molecular rulers to determine the length. The pointed end is important for binding dynein-dynactin cargo adapters. Consists of 4 subunits: ACTR10, DCNT4, DCTN5 and DCTN6. The barbed end is composed of a CAPZA1:CAPZB heterodimers, which binds ACTR1A/ACTB filament and dynactin and stabilizes dynactin.

It localises to the cytoplasm. It is found in the cytoskeleton. In terms of biological role, part of the dynactin complex that activates the molecular motor dynein for ultra-processive transport along microtubules. This Homo sapiens (Human) protein is Actin-related protein 10 (ACTR10).